Reading from the N-terminus, the 92-residue chain is C-C motif chemokine 3 (92 aa).

The signal sequence occupies residues 1 to 23 (MKVSTAALAVLLCTMALWNEVFS). Intrachain disulfides connect C34/C57 and C35/C73.

The protein belongs to the intercrine beta (chemokine CC) family. Self-associates. Also heterodimer of MIP-1-alpha(4-69) and MIP-1-beta(3-69). Interacts with CCR1.

The protein resides in the secreted. In terms of biological role, monokine with inflammatory and chemokinetic properties. Binds to CCR1, CCR4 and CCR5. One of the major HIV-suppressive factors produced by CD8+ T-cells. Recombinant MIP-1-alpha induces a dose-dependent inhibition of different strains of HIV-1, HIV-2, and simian immunodeficiency virus (SIV). This Rattus norvegicus (Rat) protein is C-C motif chemokine 3 (Ccl3).